The chain runs to 458 residues: Transcription factor PCF5 (458 aa).

Disordered stretches follow at residues 1-103 (MGDA…RGPR), 159-182 (GAGA…ENSD), 278-299 (MFHH…TTQQ), and 424-458 (RLPA…ASHH). A compositionally biased stretch (gly residues) spans 65–74 (RGGGGGGGGE). The TCP domain occupies 89 to 147 (RKDRHSKVCTARGPRDRRVRLSAHTAIQFYDVQDRLGYDRPSKAVDWLIKNAKDAIDKL).

In terms of assembly, forms homodimers and heterodimers.

Its subcellular location is the nucleus. Functionally, transcription activator. Binds the promoter core sequence 5'-GGNCC-3'. The polypeptide is Transcription factor PCF5 (PCF5) (Oryza sativa subsp. japonica (Rice)).